The primary structure comprises 196 residues: Ribosomal RNA large subunit methyltransferase E (196 aa).

The S-adenosyl-L-methionine site is built by Gly50, Trp52, Asp70, Asp87, and Asp112. Lys152 (proton acceptor) is an active-site residue.

This sequence belongs to the class I-like SAM-binding methyltransferase superfamily. RNA methyltransferase RlmE family.

It is found in the cytoplasm. It catalyses the reaction uridine(2552) in 23S rRNA + S-adenosyl-L-methionine = 2'-O-methyluridine(2552) in 23S rRNA + S-adenosyl-L-homocysteine + H(+). Its function is as follows. Specifically methylates the uridine in position 2552 of 23S rRNA at the 2'-O position of the ribose in the fully assembled 50S ribosomal subunit. The protein is Ribosomal RNA large subunit methyltransferase E of Bdellovibrio bacteriovorus (strain ATCC 15356 / DSM 50701 / NCIMB 9529 / HD100).